The sequence spans 222 residues: Uracil-DNA glycosylase (222 aa).

D66 functions as the Proton acceptor in the catalytic mechanism.

It belongs to the uracil-DNA glycosylase (UDG) superfamily. UNG family.

The protein resides in the cytoplasm. The catalysed reaction is Hydrolyzes single-stranded DNA or mismatched double-stranded DNA and polynucleotides, releasing free uracil.. In terms of biological role, excises uracil residues from the DNA which can arise as a result of misincorporation of dUMP residues by DNA polymerase or due to deamination of cytosine. The protein is Uracil-DNA glycosylase of Porphyromonas gingivalis (strain ATCC BAA-308 / W83).